The chain runs to 172 residues: Lipoprotein signal peptidase (172 aa).

Transmembrane regions (helical) follow at residues 10-30, 68-88, and 98-118; these read LIWL…KAWV, WQLW…AFWL, and SALP…DRLM. Catalysis depends on residues D124 and D142. The chain crosses the membrane as a helical span at residues 138–158; the sequence is FNIADSAIVGGAIGIAVFGLF.

Belongs to the peptidase A8 family.

It localises to the cell inner membrane. It carries out the reaction Release of signal peptides from bacterial membrane prolipoproteins. Hydrolyzes -Xaa-Yaa-Zaa-|-(S,diacylglyceryl)Cys-, in which Xaa is hydrophobic (preferably Leu), and Yaa (Ala or Ser) and Zaa (Gly or Ala) have small, neutral side chains.. It participates in protein modification; lipoprotein biosynthesis (signal peptide cleavage). In terms of biological role, this protein specifically catalyzes the removal of signal peptides from prolipoproteins. The sequence is that of Lipoprotein signal peptidase from Xanthomonas axonopodis pv. citri (strain 306).